Reading from the N-terminus, the 210-residue chain is Na(+)-translocating NADH-quinone reductase subunit D (210 aa).

5 helical membrane-spanning segments follow: residues 42–62 (FVMT…ISLI), 72–92 (IIAQ…VLKA), 103–123 (VFVG…AYAM), 131–151 (FLDG…VATV), and 178–198 (NGLL…IWGV).

The protein belongs to the NqrDE/RnfAE family. Composed of six subunits; NqrA, NqrB, NqrC, NqrD, NqrE and NqrF.

The protein localises to the cell inner membrane. The enzyme catalyses a ubiquinone + n Na(+)(in) + NADH + H(+) = a ubiquinol + n Na(+)(out) + NAD(+). Its function is as follows. NQR complex catalyzes the reduction of ubiquinone-1 to ubiquinol by two successive reactions, coupled with the transport of Na(+) ions from the cytoplasm to the periplasm. NqrA to NqrE are probably involved in the second step, the conversion of ubisemiquinone to ubiquinol. The chain is Na(+)-translocating NADH-quinone reductase subunit D from Aeromonas salmonicida (strain A449).